The sequence spans 644 residues: MFQDNPLLAQLKQQLHSQTPRAEGVVKATEKGFGFLEVDAQKSYFIPPPQMKKVMHGDRVIAVIHTEKEKESAEPEELIEPFLTRFVGRVQKKDDRLSIVPDHPLLKDAIPCRAERGVSHDFQNGDWAVAEMRRHPLKGDRGFYAELTQFITFGEDHFVPWWVTLARHNLEREAPDGVATEMLDENLTREDLTALDFVTIDSASTEDMDDALYVEALDGDRLQLTVAIADPTAWIAEGSKLDNIAKVRAFTNYLPGFNIPMLPRELSDDLCSLREGVQRPALVCRMIIEADGAISDDIHFFAAIIESKAKLAYDDVSDWLEEKGDWQPGSEAIAAQIRLLQQICQRRSAWRTEHALVFKDRPDYRFVLGEKGEVLDIVAEPRRIANRIVEESMIAANICAARVLRDKLGFGVYNVHAGFDPASTEQLATLLQSHGMHVDANDVLTLPGFCKLRRELDAQPSGFLDSRIRRFQSFAEISTEPGPHFGLGLEAYATWTSPIRKYGDMVNHRLLKAIIKGESATRPQDEATVQMAERRRLNRMAERDVGDWLYARFLKDKAGTDSRFAAEIIDVSRGGMRVRLVDNGAVAFIPAPFLHAVRDELVCSQENGTVQIKGETVYKVTDVIDVTIAEVRMETRSVIARPVA.

Positions 189–516 (REDLTALDFV…NHRLLKAIIK (328 aa)) constitute an RNB domain. Residues 561 to 643 (DSRFAAEIID…ETRSVIARPV (83 aa)) form the S1 motif domain.

This sequence belongs to the RNR ribonuclease family. RNase II subfamily.

Its subcellular location is the cytoplasm. It carries out the reaction Exonucleolytic cleavage in the 3'- to 5'-direction to yield nucleoside 5'-phosphates.. Functionally, involved in mRNA degradation. Hydrolyzes single-stranded polyribonucleotides processively in the 3' to 5' direction. The polypeptide is Exoribonuclease 2 (Cronobacter sakazakii (strain ATCC BAA-894) (Enterobacter sakazakii)).